We begin with the raw amino-acid sequence, 368 residues long: Alanine racemase (368 aa).

The active-site Proton acceptor; specific for D-alanine is K40. Position 40 is an N6-(pyridoxal phosphate)lysine (K40). Residue R134 coordinates substrate. Y263 (proton acceptor; specific for L-alanine) is an active-site residue. A substrate-binding site is contributed by M310.

It belongs to the alanine racemase family. Pyridoxal 5'-phosphate serves as cofactor.

The catalysed reaction is L-alanine = D-alanine. Its pathway is amino-acid biosynthesis; D-alanine biosynthesis; D-alanine from L-alanine: step 1/1. Catalyzes the interconversion of L-alanine and D-alanine. May also act on other amino acids. The polypeptide is Alanine racemase (alr) (Listeria monocytogenes serotype 4b (strain CLIP80459)).